The following is a 67-amino-acid chain: Large ribosomal subunit protein uL30 (67 aa).

It belongs to the universal ribosomal protein uL30 family. Part of the 50S ribosomal subunit.

The protein is Large ribosomal subunit protein uL30 of Sinorhizobium medicae (strain WSM419) (Ensifer medicae).